A 282-amino-acid polypeptide reads, in one-letter code: 3-methyl-2-oxobutanoate hydroxymethyltransferase (282 aa).

Positions 44 and 83 each coordinate Mg(2+). Residues 44–45, aspartate 83, and lysine 113 each bind 3-methyl-2-oxobutanoate; that span reads DS. Glutamate 115 provides a ligand contact to Mg(2+). The active-site Proton acceptor is glutamate 182.

The protein belongs to the PanB family. In terms of assembly, homodecamer; pentamer of dimers. Requires Mg(2+) as cofactor.

The protein localises to the cytoplasm. It carries out the reaction 3-methyl-2-oxobutanoate + (6R)-5,10-methylene-5,6,7,8-tetrahydrofolate + H2O = 2-dehydropantoate + (6S)-5,6,7,8-tetrahydrofolate. It participates in cofactor biosynthesis; (R)-pantothenate biosynthesis; (R)-pantoate from 3-methyl-2-oxobutanoate: step 1/2. Catalyzes the reversible reaction in which hydroxymethyl group from 5,10-methylenetetrahydrofolate is transferred onto alpha-ketoisovalerate to form ketopantoate. In Dehalococcoides mccartyi (strain ATCC BAA-2266 / KCTC 15142 / 195) (Dehalococcoides ethenogenes (strain 195)), this protein is 3-methyl-2-oxobutanoate hydroxymethyltransferase.